Reading from the N-terminus, the 39-residue chain is MERTPNPNNQPVELNRTSLYLGLLLVFVLGILFSSYFFN.

The chain crosses the membrane as a helical span at residues 18–38; the sequence is SLYLGLLLVFVLGILFSSYFF.

It belongs to the PsbL family. As to quaternary structure, PSII is composed of 1 copy each of membrane proteins PsbA, PsbB, PsbC, PsbD, PsbE, PsbF, PsbH, PsbI, PsbJ, PsbK, PsbL, PsbM, PsbT, PsbX, PsbY, PsbZ, Psb30/Ycf12, peripheral proteins PsbO, CyanoQ (PsbQ), PsbU, PsbV and a large number of cofactors. It forms dimeric complexes.

The protein resides in the cellular thylakoid membrane. In terms of biological role, one of the components of the core complex of photosystem II (PSII). PSII is a light-driven water:plastoquinone oxidoreductase that uses light energy to abstract electrons from H(2)O, generating O(2) and a proton gradient subsequently used for ATP formation. It consists of a core antenna complex that captures photons, and an electron transfer chain that converts photonic excitation into a charge separation. This subunit is found at the monomer-monomer interface and is required for correct PSII assembly and/or dimerization. The sequence is that of Photosystem II reaction center protein L from Trichormus variabilis (strain ATCC 29413 / PCC 7937) (Anabaena variabilis).